We begin with the raw amino-acid sequence, 211 residues long: MTTLTTLLALADSRLPIGGHVHSGGVEEAVTSGLVTNLETLHAYLVRRVRTQGLVAASIAAAVHAGTLTVAAADRETDARTPAPAARTASRAQGRGLARLARRVWPGHDWTALGRAPHLPVASGAVGAVAGLTPGQTALSVVYTTMTGSATAAQRLLALDPGDVAALTFGLAPLCDDVAAAAAEEPADLSDPLLDVLAQRHSERERPLFAS.

It belongs to the UreF family. In terms of assembly, ureD, UreF and UreG form a complex that acts as a GTP-hydrolysis-dependent molecular chaperone, activating the urease apoprotein by helping to assemble the nickel containing metallocenter of UreC. The UreE protein probably delivers the nickel.

It localises to the cytoplasm. In terms of biological role, required for maturation of urease via the functional incorporation of the urease nickel metallocenter. The chain is Urease accessory protein UreF from Mycobacterium sp. (strain JLS).